A 101-amino-acid chain; its full sequence is Small ribosomal subunit protein uS14 (101 aa).

The protein belongs to the universal ribosomal protein uS14 family. In terms of assembly, part of the 30S ribosomal subunit. Contacts proteins S3 and S10.

Binds 16S rRNA, required for the assembly of 30S particles and may also be responsible for determining the conformation of the 16S rRNA at the A site. This chain is Small ribosomal subunit protein uS14, found in Dinoroseobacter shibae (strain DSM 16493 / NCIMB 14021 / DFL 12).